The sequence spans 290 residues: 4-diphosphocytidyl-2-C-methyl-D-erythritol kinase (290 aa).

The active site involves Lys-10. 96 to 106 (PIAAGLGGGSS) provides a ligand contact to ATP. Residue Asp-138 is part of the active site.

Belongs to the GHMP kinase family. IspE subfamily.

The enzyme catalyses 4-CDP-2-C-methyl-D-erythritol + ATP = 4-CDP-2-C-methyl-D-erythritol 2-phosphate + ADP + H(+). It functions in the pathway isoprenoid biosynthesis; isopentenyl diphosphate biosynthesis via DXP pathway; isopentenyl diphosphate from 1-deoxy-D-xylulose 5-phosphate: step 3/6. Catalyzes the phosphorylation of the position 2 hydroxy group of 4-diphosphocytidyl-2C-methyl-D-erythritol. This is 4-diphosphocytidyl-2-C-methyl-D-erythritol kinase from Caulobacter vibrioides (strain NA1000 / CB15N) (Caulobacter crescentus).